A 282-amino-acid polypeptide reads, in one-letter code: MATYLIGDVHGCYDELIALLQQVEFTPDTDTLWLTGDLVARGPGSLDVLRYVKSLGNSVRLVLGNHDLHLLAVFAGISRNKPKDRLTPLLEAPDADELLNWLRRQPLLQVDEEKKLVMAHAGITPQWDLQTAKECARDVEAVLSSDSYPFFLDAMYGDMPNNWSPELSGLARLRFITNAFTRMRYCFPNGQLDMYSKASPENAPAPLKPWFAIPGPVSEAYSIAFGHWASLEGKGTPEGIYALDTGCCWGGELTCLRWEDKQYFVQPSNRQMDMGEGEAVNA.

It belongs to the Ap4A hydrolase family.

The enzyme catalyses P(1),P(4)-bis(5'-adenosyl) tetraphosphate + H2O = 2 ADP + 2 H(+). Hydrolyzes diadenosine 5',5'''-P1,P4-tetraphosphate to yield ADP. The sequence is that of Bis(5'-nucleosyl)-tetraphosphatase, symmetrical from Salmonella agona (strain SL483).